Reading from the N-terminus, the 161-residue chain is 2-C-methyl-D-erythritol 2,4-cyclodiphosphate synthase (161 aa).

2 residues coordinate a divalent metal cation: Asp8 and His10. 4-CDP-2-C-methyl-D-erythritol 2-phosphate-binding positions include 8-10 (DLH) and 34-35 (HS). His42 is an a divalent metal cation binding site. Residues 56 to 58 (DIG), 100 to 106 (AEYPKML), and Arg142 each bind 4-CDP-2-C-methyl-D-erythritol 2-phosphate.

Belongs to the IspF family. As to quaternary structure, homotrimer. It depends on a divalent metal cation as a cofactor.

The catalysed reaction is 4-CDP-2-C-methyl-D-erythritol 2-phosphate = 2-C-methyl-D-erythritol 2,4-cyclic diphosphate + CMP. It participates in isoprenoid biosynthesis; isopentenyl diphosphate biosynthesis via DXP pathway; isopentenyl diphosphate from 1-deoxy-D-xylulose 5-phosphate: step 4/6. Involved in the biosynthesis of isopentenyl diphosphate (IPP) and dimethylallyl diphosphate (DMAPP), two major building blocks of isoprenoid compounds. Catalyzes the conversion of 4-diphosphocytidyl-2-C-methyl-D-erythritol 2-phosphate (CDP-ME2P) to 2-C-methyl-D-erythritol 2,4-cyclodiphosphate (ME-CPP) with a corresponding release of cytidine 5-monophosphate (CMP). This Buchnera aphidicola subsp. Acyrthosiphon pisum (strain 5A) protein is 2-C-methyl-D-erythritol 2,4-cyclodiphosphate synthase.